The sequence spans 226 residues: MDWGALQTILGGVNKYSTSIGKIWLTVLFIFRIMILVVAAKEVWGDEQADFVCNTLQPGCKNVCYDHYFPISHIRLWALQLIFVSTPALLVAMHVAYRRHEKKRKFIKGEIKNEFKDIEEIKTQKVRIEGSLWWTYTSSIFFRVVFEAAFMYVFYVMYDGFSMQRLVKCNAWPCPNTVDCFVSRPTEKTVFTVFMIAVSGICILLNVTELCYLLIRYCSGKSKKPV.

An intramembrane segment occupies 2 to 13 (DWGALQTILGGV). The Cytoplasmic portion of the chain corresponds to 14–20 (NKYSTSI). A helical transmembrane segment spans residues 21 to 40 (GKIWLTVLFIFRIMILVVAA). Over 41–73 (KEVWGDEQADFVCNTLQPGCKNVCYDHYFPISH) the chain is Extracellular. Positions 42, 45, and 47 each coordinate Ca(2+). 3 disulfides stabilise this stretch: cysteine 53–cysteine 180, cysteine 60–cysteine 174, and cysteine 64–cysteine 169. The chain crosses the membrane as a helical span at residues 74 to 94 (IRLWALQLIFVSTPALLVAMH). At 95 to 135 (VAYRRHEKKRKFIKGEIKNEFKDIEEIKTQKVRIEGSLWWT) the chain is on the cytoplasmic side. The chain crosses the membrane as a helical span at residues 136–156 (YTSSIFFRVVFEAAFMYVFYV). The Extracellular portion of the chain corresponds to 157–189 (MYDGFSMQRLVKCNAWPCPNTVDCFVSRPTEKT). Residues 190–210 (VFTVFMIAVSGICILLNVTEL) traverse the membrane as a helical segment. Residues 211-226 (CYLLIRYCSGKSKKPV) are Cytoplasmic-facing.

This sequence belongs to the connexin family. Beta-type (group I) subfamily. In terms of assembly, a hemichannel or connexon is composed of a hexamer of connexins. A functional gap junction is formed by the apposition of two hemichannels. Forms heteromeric channels with GJB4. Interacts with CNST.

Its subcellular location is the cell membrane. The protein localises to the cell junction. It is found in the gap junction. Functionally, structural component of gap junctions. Gap junctions are dodecameric channels that connect the cytoplasm of adjoining cells. They are formed by the docking of two hexameric hemichannels, one from each cell membrane. Small molecules and ions diffuse from one cell to a neighboring cell via the central pore. The chain is Gap junction beta-2 protein (GJB2) from Macaca mulatta (Rhesus macaque).